We begin with the raw amino-acid sequence, 826 residues long: Leucine--tRNA ligase (826 aa).

The short motif at 42–52 (PYPSGNLHMGH) is the 'HIGH' region element. A 'KMSKS' region motif is present at residues 581–585 (KMSKS). Lys584 is a binding site for ATP.

This sequence belongs to the class-I aminoacyl-tRNA synthetase family.

Its subcellular location is the cytoplasm. It catalyses the reaction tRNA(Leu) + L-leucine + ATP = L-leucyl-tRNA(Leu) + AMP + diphosphate. This is Leucine--tRNA ligase from Desulforudis audaxviator (strain MP104C).